The primary structure comprises 339 residues: Ketol-acid reductoisomerase (NADP(+)) (339 aa).

The KARI N-terminal Rossmann domain occupies 1-182; the sequence is MRVYYDRDAD…GGGRAGIIET (182 aa). Residues 24-27, R48, S51, T53, and 83-86 each bind NADP(+); these read YGSQ and DELQ. The active site involves H108. G134 lines the NADP(+) pocket. The 146-residue stretch at 183-328 folds into the KARI C-terminal knotted domain; sequence TFREECETDL…ARLREMMPWI (146 aa). 4 residues coordinate Mg(2+): D191, E195, E227, and E231. Position 252 (S252) interacts with substrate.

This sequence belongs to the ketol-acid reductoisomerase family. It depends on Mg(2+) as a cofactor.

The catalysed reaction is (2R)-2,3-dihydroxy-3-methylbutanoate + NADP(+) = (2S)-2-acetolactate + NADPH + H(+). It carries out the reaction (2R,3R)-2,3-dihydroxy-3-methylpentanoate + NADP(+) = (S)-2-ethyl-2-hydroxy-3-oxobutanoate + NADPH + H(+). Its pathway is amino-acid biosynthesis; L-isoleucine biosynthesis; L-isoleucine from 2-oxobutanoate: step 2/4. It functions in the pathway amino-acid biosynthesis; L-valine biosynthesis; L-valine from pyruvate: step 2/4. Its function is as follows. Involved in the biosynthesis of branched-chain amino acids (BCAA). Catalyzes an alkyl-migration followed by a ketol-acid reduction of (S)-2-acetolactate (S2AL) to yield (R)-2,3-dihydroxy-isovalerate. In the isomerase reaction, S2AL is rearranged via a Mg-dependent methyl migration to produce 3-hydroxy-3-methyl-2-ketobutyrate (HMKB). In the reductase reaction, this 2-ketoacid undergoes a metal-dependent reduction by NADPH to yield (R)-2,3-dihydroxy-isovalerate. This Parvibaculum lavamentivorans (strain DS-1 / DSM 13023 / NCIMB 13966) protein is Ketol-acid reductoisomerase (NADP(+)).